A 221-amino-acid polypeptide reads, in one-letter code: GTPase Obg (221 aa).

The OBG-type G domain maps to Pro1–Gln61. GTP contacts are provided by residues Asn10–Asp13 and Ser42–Val44. An OCT domain is found at Val82–Pro162.

It belongs to the TRAFAC class OBG-HflX-like GTPase superfamily. OBG GTPase family. In terms of assembly, monomer. Mg(2+) serves as cofactor.

Its subcellular location is the cytoplasm. Functionally, an essential GTPase which binds GTP, GDP and possibly (p)ppGpp with moderate affinity, with high nucleotide exchange rates and a fairly low GTP hydrolysis rate. Plays a role in control of the cell cycle, stress response, ribosome biogenesis and in those bacteria that undergo differentiation, in morphogenesis control. This chain is GTPase Obg, found in Corynebacterium melassecola.